A 160-amino-acid chain; its full sequence is M-phase phosphoprotein 6 (160 aa).

Residues Lys-37 and Lys-86 each participate in a glycyl lysine isopeptide (Lys-Gly) (interchain with G-Cter in SUMO2) cross-link. At Ser-110 the chain carries Phosphoserine. A Nuclear localization signal motif is present at residues 116-133 (RRYETLVGTIGKKFARKR). Lys-127 is covalently cross-linked (Glycyl lysine isopeptide (Lys-Gly) (interchain with G-Cter in SUMO2)). Thr-147 carries the phosphothreonine modification. Glycyl lysine isopeptide (Lys-Gly) (interchain with G-Cter in SUMO2) cross-links involve residues Lys-150 and Lys-153.

The protein belongs to the MPP6 family. Associates with the RNA exosome complex, mediated by EXOSC3. Interacts with ARHGAP18. Interacts with exosome cofactors EXOSC10 and MTREX. In terms of processing, phosphorylated in M (mitotic) phase.

Its subcellular location is the nucleus. The protein localises to the nucleolus. It is found in the cytoplasm. Functionally, RNA-binding protein that associates with the RNA exosome complex. Involved in the 3'-processing of the 7S pre-RNA to the mature 5.8S rRNA and play a role in recruiting the RNA exosome complex to pre-rRNA; this function may include C1D. This Homo sapiens (Human) protein is M-phase phosphoprotein 6.